The primary structure comprises 614 residues: Sodium- and chloride-dependent betaine transporter (614 aa).

The interval 1–33 is disordered; it reads MDRKVAVPEDGPPVVSWLPEEGEKLDQEGEDQV. The Cytoplasmic portion of the chain corresponds to 1–44; the sequence is MDRKVAVPEDGPPVVSWLPEEGEKLDQEGEDQVKDRGQWTNKME. Over residues 21–33 the composition is skewed to basic and acidic residues; it reads EGEKLDQEGEDQV. A run of 3 helical transmembrane segments spans residues 45–65, 73–92, and 117–137; these read FVLS…FPYL, AFFI…VFFL, and GIGL…IIIL. Residues 138–210 are Extracellular-facing; sequence AWALFYLFSS…SGIHDLGALR (73 aa). Cys-157 and Cys-166 form a disulfide bridge. 2 N-linked (GlcNAc...) asparagine glycosylation sites follow: Asn-171 and Asn-183. 9 helical membrane-spanning segments follow: residues 211-229, 238-255, 291-308, 320-341, 374-393, 423-441, 458-478, 499-518, and 538-556; these read WELA…FCIW, VVYF…ILLI, IFFS…LGSY, IALC…FSIL, MPLS…FLGL, LLIL…FLVT, GICL…VYGA, ISWL…FSLS, and IGWF…FVII. Residues 557-614 are Cytoplasmic-facing; sequence TLLKTRGSFKKRLRQLTTPDPSLPQPKQHLYLDGGTSQDCGPSPTKEGLIVGEKETHL. The disordered stretch occupies residues 591 to 614; it reads GTSQDCGPSPTKEGLIVGEKETHL.

This sequence belongs to the sodium:neurotransmitter symporter (SNF) (TC 2.A.22) family. SLC6A12 subfamily. Interacts with LIN7C. Kidney.

The protein localises to the basolateral cell membrane. The protein resides in the cell membrane. The enzyme catalyses 4-aminobutanoate(out) + chloride(out) + 3 Na(+)(out) = 4-aminobutanoate(in) + chloride(in) + 3 Na(+)(in). The catalysed reaction is glycine betaine(out) + 2 chloride(out) + 3 Na(+)(out) = glycine betaine(in) + 2 chloride(in) + 3 Na(+)(in). In terms of biological role, transporter that mediates cellular uptake of betaine and GABA in a sodium- and chloride-dependent process. May have a role in regulation of GABAergic transmission in the brain through the reuptake of GABA into presynaptic terminals, as well as in osmotic regulation. Probably also involved in renal and hepatic osmotic regulation. The protein is Sodium- and chloride-dependent betaine transporter (SLC6A12) of Canis lupus familiaris (Dog).